The chain runs to 205 residues: Glycerol-3-phosphate acyltransferase (205 aa).

A run of 5 helical transmembrane segments spans residues 3–23, 53–73, 80–100, 112–132, and 138–158; these read VFALGMILFAYLCGSLSSAIL, GVAATVLVFDVLKGMLPVWLA, PFYLGLTAIAACLGHIYPVFF, LGAIAPIGWDLTGLMTGTWLL, and GYSSLGAIVSALIAPFYVWWF.

The protein belongs to the PlsY family. As to quaternary structure, probably interacts with PlsX.

The protein localises to the cell inner membrane. The catalysed reaction is an acyl phosphate + sn-glycerol 3-phosphate = a 1-acyl-sn-glycero-3-phosphate + phosphate. Its pathway is lipid metabolism; phospholipid metabolism. Functionally, catalyzes the transfer of an acyl group from acyl-phosphate (acyl-PO(4)) to glycerol-3-phosphate (G3P) to form lysophosphatidic acid (LPA). This enzyme utilizes acyl-phosphate as fatty acyl donor, but not acyl-CoA or acyl-ACP. The chain is Glycerol-3-phosphate acyltransferase from Erwinia tasmaniensis (strain DSM 17950 / CFBP 7177 / CIP 109463 / NCPPB 4357 / Et1/99).